A 732-amino-acid chain; its full sequence is Subtilisin-like protease SBT4.13 (732 aa).

Residues 1–24 form the signal peptide; the sequence is MATLAASSSLLSCLLVLFLSSVSA. The propeptide at 25–109 is activation peptide; sequence VTDDKQVYIV…VFPNKKLQLQ (85 aa). The Inhibitor I9 domain maps to 31-108; sequence VYIVYMGSLS…SVFPNKKLQL (78 aa). Residues 113–579 form the Peptidase S8 domain; the sequence is SWDFMGLKEG…SGHVDPIAAS (467 aa). The active-site Charge relay system is Asp141. Asn172 carries N-linked (GlcNAc...) asparagine glycosylation. His196 serves as the catalytic Charge relay system. An N-linked (GlcNAc...) asparagine glycan is attached at Asn219. One can recognise a PA domain in the interval 352 to 436; the sequence is DYPLVYGKSA…GLLTEDFESL (85 aa). The N-linked (GlcNAc...) asparagine glycan is linked to Asn458. The active-site Charge relay system is the Ser518. 4 N-linked (GlcNAc...) asparagine glycosylation sites follow: Asn555, Asn600, Asn648, and Asn658.

Belongs to the peptidase S8 family. In terms of processing, the C-terminal propeptide is autocleaved.

The protein resides in the secreted. The sequence is that of Subtilisin-like protease SBT4.13 from Arabidopsis thaliana (Mouse-ear cress).